A 460-amino-acid chain; its full sequence is Cysteine--tRNA ligase (460 aa).

Residue C28 coordinates Zn(2+). The 'HIGH' region motif lies at 30-40 (MTVYDYCHLGH). 3 residues coordinate Zn(2+): C209, H234, and E238. Positions 266 to 270 (KMSKS) match the 'KMSKS' region motif. K269 contacts ATP.

It belongs to the class-I aminoacyl-tRNA synthetase family. Monomer. It depends on Zn(2+) as a cofactor.

It localises to the cytoplasm. The enzyme catalyses tRNA(Cys) + L-cysteine + ATP = L-cysteinyl-tRNA(Cys) + AMP + diphosphate. In Pseudomonas syringae pv. tomato (strain ATCC BAA-871 / DC3000), this protein is Cysteine--tRNA ligase.